Here is a 511-residue protein sequence, read N- to C-terminus: Bifunctional purine biosynthesis protein PurH (511 aa).

The MGS-like domain occupies 1-145 (MKQRALVSVS…KNHKFVSVIV (145 aa)).

Belongs to the PurH family.

The catalysed reaction is (6R)-10-formyltetrahydrofolate + 5-amino-1-(5-phospho-beta-D-ribosyl)imidazole-4-carboxamide = 5-formamido-1-(5-phospho-D-ribosyl)imidazole-4-carboxamide + (6S)-5,6,7,8-tetrahydrofolate. It catalyses the reaction IMP + H2O = 5-formamido-1-(5-phospho-D-ribosyl)imidazole-4-carboxamide. The protein operates within purine metabolism; IMP biosynthesis via de novo pathway; 5-formamido-1-(5-phospho-D-ribosyl)imidazole-4-carboxamide from 5-amino-1-(5-phospho-D-ribosyl)imidazole-4-carboxamide (10-formyl THF route): step 1/1. Its pathway is purine metabolism; IMP biosynthesis via de novo pathway; IMP from 5-formamido-1-(5-phospho-D-ribosyl)imidazole-4-carboxamide: step 1/1. This is Bifunctional purine biosynthesis protein PurH from Bacillus cereus (strain AH187).